The following is a 99-amino-acid chain: Ferredoxin, heterocyst (99 aa).

A 2Fe-2S ferredoxin-type domain is found at 4-96; it reads YQVRLINKKE…NCTIKTHQEP (93 aa). The [2Fe-2S] cluster site is built by C42, C47, C50, and C80.

Belongs to the 2Fe2S plant-type ferredoxin family. [2Fe-2S] cluster is required as a cofactor.

Functionally, ferredoxins are iron-sulfur proteins that transfer electrons in a wide variety of metabolic reactions. This Microchaete diplosiphon (Fremyella diplosiphon) protein is Ferredoxin, heterocyst (fdxH).